The chain runs to 177 residues: ATP synthase subunit delta (177 aa).

This sequence belongs to the ATPase delta chain family. In terms of assembly, F-type ATPases have 2 components, F(1) - the catalytic core - and F(0) - the membrane proton channel. F(1) has five subunits: alpha(3), beta(3), gamma(1), delta(1), epsilon(1). F(0) has three main subunits: a(1), b(2) and c(10-14). The alpha and beta chains form an alternating ring which encloses part of the gamma chain. F(1) is attached to F(0) by a central stalk formed by the gamma and epsilon chains, while a peripheral stalk is formed by the delta and b chains.

The protein localises to the cell inner membrane. Functionally, f(1)F(0) ATP synthase produces ATP from ADP in the presence of a proton or sodium gradient. F-type ATPases consist of two structural domains, F(1) containing the extramembraneous catalytic core and F(0) containing the membrane proton channel, linked together by a central stalk and a peripheral stalk. During catalysis, ATP synthesis in the catalytic domain of F(1) is coupled via a rotary mechanism of the central stalk subunits to proton translocation. In terms of biological role, this protein is part of the stalk that links CF(0) to CF(1). It either transmits conformational changes from CF(0) to CF(1) or is implicated in proton conduction. This is ATP synthase subunit delta from Yersinia pseudotuberculosis serotype O:1b (strain IP 31758).